The sequence spans 597 residues: DNA mismatch repair protein MutL (597 aa).

The protein belongs to the DNA mismatch repair MutL/HexB family.

Its function is as follows. This protein is involved in the repair of mismatches in DNA. It is required for dam-dependent methyl-directed DNA mismatch repair. May act as a 'molecular matchmaker', a protein that promotes the formation of a stable complex between two or more DNA-binding proteins in an ATP-dependent manner without itself being part of a final effector complex. The chain is DNA mismatch repair protein MutL from Rhodopseudomonas palustris (strain HaA2).